The sequence spans 605 residues: Elongation factor 4 (605 aa).

The tr-type G domain maps to 9–192 (NRIRNFCIIA…AIVQRIPAPA (184 aa)). Residues 21–26 (DHGKST) and 139–142 (NKID) each bind GTP.

Belongs to the TRAFAC class translation factor GTPase superfamily. Classic translation factor GTPase family. LepA subfamily.

It is found in the cell inner membrane. The enzyme catalyses GTP + H2O = GDP + phosphate + H(+). Required for accurate and efficient protein synthesis under certain stress conditions. May act as a fidelity factor of the translation reaction, by catalyzing a one-codon backward translocation of tRNAs on improperly translocated ribosomes. Back-translocation proceeds from a post-translocation (POST) complex to a pre-translocation (PRE) complex, thus giving elongation factor G a second chance to translocate the tRNAs correctly. Binds to ribosomes in a GTP-dependent manner. The chain is Elongation factor 4 from Pelodictyon phaeoclathratiforme (strain DSM 5477 / BU-1).